A 328-amino-acid polypeptide reads, in one-letter code: L-lactate dehydrogenase (328 aa).

NAD(+) contacts are provided by residues V18, E39, K46, Y71, and 85–86; that span reads GA. Substrate is bound by residues Q88 and R94. Residues S107, 124 to 126, and S149 contribute to the NAD(+) site; that span reads AAN. 126 to 129 lines the substrate pocket; sequence NPVD. Residue 154–157 coordinates substrate; the sequence is DTAR. 2 residues coordinate beta-D-fructose 1,6-bisphosphate: R159 and H174. H181 acts as the Proton acceptor in catalysis. Phosphotyrosine is present on Y226. T235 contributes to the substrate binding site.

It belongs to the LDH/MDH superfamily. LDH family. Homotetramer.

The protein localises to the cytoplasm. It catalyses the reaction (S)-lactate + NAD(+) = pyruvate + NADH + H(+). It participates in fermentation; pyruvate fermentation to lactate; (S)-lactate from pyruvate: step 1/1. With respect to regulation, allosterically activated by fructose 1,6-bisphosphate (FBP). In terms of biological role, catalyzes the conversion of lactate to pyruvate. This chain is L-lactate dehydrogenase, found in Streptococcus mutans serotype c (strain ATCC 700610 / UA159).